The following is a 424-amino-acid chain: L-glutamine:2-deoxy-scyllo-inosose aminotransferase (424 aa).

At K202 the chain carries N6-(pyridoxal phosphate)lysine.

The protein belongs to the DegT/DnrJ/EryC1 family. L-glutamine:2-deoxy-scyllo-inosose/scyllo-inosose aminotransferase subfamily. The cofactor is pyridoxal 5'-phosphate.

It catalyses the reaction 2-deoxy-L-scyllo-inosose + L-glutamine = 2-deoxy-scyllo-inosamine + 2-oxoglutaramate. The catalysed reaction is 3-amino-2,3-dideoxy-scyllo-inosose + L-glutamine = 2-deoxystreptamine + 2-oxoglutaramate. Its pathway is metabolic intermediate biosynthesis; 2-deoxystreptamine biosynthesis; 2-deoxystreptamine from D-glucose 6-phosphate: step 2/4. It functions in the pathway metabolic intermediate biosynthesis; 2-deoxystreptamine biosynthesis; 2-deoxystreptamine from D-glucose 6-phosphate: step 4/4. The protein operates within antibiotic biosynthesis; paromomycin biosynthesis. Its function is as follows. Catalyzes the PLP-dependent transamination of 2-deoxy-scyllo-inosose (2-DOI) to form 2-deoxy-scyllo-inosamine (2-DOIA) using L-glutamine as the amino donor. Also catalyzes the transamination of 3-amino-2,3-dideoxy-scyllo-inosose (keto-2-DOIA) into 2-deoxystreptamine (2-DOS). The protein is L-glutamine:2-deoxy-scyllo-inosose aminotransferase (parS) of Streptomyces paromomycinus (Streptomyces rimosus subsp. paromomycinus).